The following is a 1006-amino-acid chain: MDSDDDYNGPADTNPRLEDEESDLDEKYPNRPRNHSTTLPFHVLFQTLFYPLSEIKKKPAGPARKKVGPHGLSSVNLTPLEKRRDIIDRFISRWRKEVGDDIYPAFRLILPDKDRDRAMYGMKEKAIGKLLIRIMKIDKNSEDALNLLNWKLPGQTTTSSMAGDFAGRCFGVLSKRPMRTEVGDMTIEEVNEKLDHLSAASKENQQLPILTEFYRRMNPEELMWLIRIILRQMKVGATERTFFDVFHPDAENLYSISSSLRRVCWELHDPNIRLEAEDRGITLMQCFQPQLAQFQMHSLDRMISRMRLTEDDPVFWIEEKLDGERMQLHMDSNDSVPGGRTFRFWSRKAKDYTYLYGNGIQDENGALTRYLSDAFADGVESLILDGEMITWDTEQDAIAPFGTLKTAALSEQRNPYSSTTRPLFRIFDILYLNGRDLTRYTLRDRRNALQKSIKPVYRRFEIHPYEEATGKTEIEEALRRVVEEASEGLVLKNPRSPYRLNERHDDWMKVKPEYMTEFGESLDVVVIGGYYGSGHRGGGLSSFLCGLRVDDAHSSQGMVASKCYSFCKVGGGFTAADYANIRHHTDGKWHEWKSRKPPTTYIELAGGDAQYERPDMWIKPEDSVVLCVKAASVAVSDQFRIGLTLRFPRFKKLRMDKDWKSALSVQEFLDLKANAERERKEKEFNVDNSRKKRAKRDNKKPLAIVGYSAEAEAQYTGPSGNIFEGLNFYITTDSNTPVKKSKAELEQLVKANGGKFFQTSNAAPSTICIADRRTVKAASLQKSGNVNIIRPSWILDCIRQSEIDAGLPDSLLPLEPRHVFFATQDKKEEIAASVDRFNDSYARNTTNDELKEILKQMSKDHHFHASQNPKIVRKLNERIQEKVNAGWEMPSGWLFKGLTILFPQNDKVDDAEVDETSQTHQQYRLNLARNTVRFAGANVVDSKSSSVTHIVVAPGSSSSDVSSIRKSHSAKPGKKVPHLVTAEWIEECWKQRTLLGEEGFQPSRGT.

The interval 1-36 (MDSDDDYNGPADTNPRLEDEESDLDEKYPNRPRNHS) is disordered. Positions 318, 320, 321, 325, 387, 427, 487, 492, 509, and 511 each coordinate ATP. The active-site N6-AMP-lysine intermediate is the Lys-320. A Mg(2+)-binding site is contributed by Glu-387. Residue Glu-487 participates in Mg(2+) binding. 2 BRCT domains span residues 718–811 (PSGN…PDSL) and 890–1002 (PSGW…GFQP).

The protein belongs to the ATP-dependent DNA ligase family. Requires Mg(2+) as cofactor.

It localises to the nucleus. The catalysed reaction is ATP + (deoxyribonucleotide)n-3'-hydroxyl + 5'-phospho-(deoxyribonucleotide)m = (deoxyribonucleotide)n+m + AMP + diphosphate.. Functionally, DNA ligase involved in DNA non-homologous end joining (NHEJ); required for double-strand break (DSB) repair. This Aspergillus oryzae (strain ATCC 42149 / RIB 40) (Yellow koji mold) protein is DNA ligase 4 (lig4).